The sequence spans 323 residues: Lipoyl synthase (323 aa).

The [4Fe-4S] cluster site is built by Cys-65, Cys-70, Cys-76, Cys-91, Cys-95, Cys-98, and Ser-304. A Radical SAM core domain is found at 77–293 (FNNGTATFMI…KKEALSIGFT (217 aa)).

Belongs to the radical SAM superfamily. Lipoyl synthase family. [4Fe-4S] cluster is required as a cofactor.

It is found in the cytoplasm. The enzyme catalyses [[Fe-S] cluster scaffold protein carrying a second [4Fe-4S](2+) cluster] + N(6)-octanoyl-L-lysyl-[protein] + 2 oxidized [2Fe-2S]-[ferredoxin] + 2 S-adenosyl-L-methionine + 4 H(+) = [[Fe-S] cluster scaffold protein] + N(6)-[(R)-dihydrolipoyl]-L-lysyl-[protein] + 4 Fe(3+) + 2 hydrogen sulfide + 2 5'-deoxyadenosine + 2 L-methionine + 2 reduced [2Fe-2S]-[ferredoxin]. Its pathway is protein modification; protein lipoylation via endogenous pathway; protein N(6)-(lipoyl)lysine from octanoyl-[acyl-carrier-protein]: step 2/2. Its function is as follows. Catalyzes the radical-mediated insertion of two sulfur atoms into the C-6 and C-8 positions of the octanoyl moiety bound to the lipoyl domains of lipoate-dependent enzymes, thereby converting the octanoylated domains into lipoylated derivatives. The chain is Lipoyl synthase from Buchnera aphidicola subsp. Acyrthosiphon pisum (strain 5A).